Consider the following 473-residue polypeptide: ATP-dependent 6-phosphofructokinase 1 (473 aa).

Phosphoserine is present on S71. ATP is bound by residues G102, 165–166 (RG), and 190–193 (GDGS). D191 contacts Mg(2+). Residues 219–221 (TID), 264–266 (MGR), E320, and 376–379 (YMIR) each bind substrate. D221 functions as the Proton acceptor in the catalytic mechanism.

This sequence belongs to the phosphofructokinase type A (PFKA) family. PPi-dependent PFK group II subfamily. Atypical ATP-dependent clade 'X' sub-subfamily. Homotetramer. It depends on Mg(2+) as a cofactor. In terms of tissue distribution, expressed in roots, leaves, stems and flowers.

Its subcellular location is the cytoplasm. It carries out the reaction beta-D-fructose 6-phosphate + ATP = beta-D-fructose 1,6-bisphosphate + ADP + H(+). It participates in carbohydrate degradation; glycolysis; D-glyceraldehyde 3-phosphate and glycerone phosphate from D-glucose: step 3/4. With respect to regulation, allosterically activated by AMP. Catalyzes the phosphorylation of D-fructose 6-phosphate to fructose 1,6-bisphosphate by ATP, the first committing step of glycolysis. This is ATP-dependent 6-phosphofructokinase 1 from Arabidopsis thaliana (Mouse-ear cress).